A 273-amino-acid chain; its full sequence is Putative pyruvate, phosphate dikinase regulatory protein (273 aa).

149–156 (GPSRTSKT) serves as a coordination point for ADP.

The protein belongs to the pyruvate, phosphate/water dikinase regulatory protein family. PDRP subfamily.

The enzyme catalyses N(tele)-phospho-L-histidyl/L-threonyl-[pyruvate, phosphate dikinase] + ADP = N(tele)-phospho-L-histidyl/O-phospho-L-threonyl-[pyruvate, phosphate dikinase] + AMP + H(+). The catalysed reaction is N(tele)-phospho-L-histidyl/O-phospho-L-threonyl-[pyruvate, phosphate dikinase] + phosphate + H(+) = N(tele)-phospho-L-histidyl/L-threonyl-[pyruvate, phosphate dikinase] + diphosphate. Bifunctional serine/threonine kinase and phosphorylase involved in the regulation of the pyruvate, phosphate dikinase (PPDK) by catalyzing its phosphorylation/dephosphorylation. This chain is Putative pyruvate, phosphate dikinase regulatory protein, found in Rickettsia africae (strain ESF-5).